The sequence spans 394 residues: Enoyl-[acyl-carrier-protein] reductase [NADH] (394 aa).

NAD(+) contacts are provided by residues 48-53, 74-75, 111-112, and 139-140; these read GASTGY, YE, DA, and LA. A substrate-binding site is contributed by Tyr-225. Tyr-235 acts as the Proton donor in catalysis. Residues Lys-244 and 273-275 contribute to the NAD(+) site; that span reads LVT.

This sequence belongs to the TER reductase family. Monomer.

The catalysed reaction is a 2,3-saturated acyl-[ACP] + NAD(+) = a (2E)-enoyl-[ACP] + NADH + H(+). Its pathway is lipid metabolism; fatty acid biosynthesis. Functionally, involved in the final reduction of the elongation cycle of fatty acid synthesis (FAS II). Catalyzes the reduction of a carbon-carbon double bond in an enoyl moiety that is covalently linked to an acyl carrier protein (ACP). The sequence is that of Enoyl-[acyl-carrier-protein] reductase [NADH] from Opitutus terrae (strain DSM 11246 / JCM 15787 / PB90-1).